The chain runs to 569 residues: Santalene synthase (569 aa).

(2E)-geranyl diphosphate is bound by residues Arg-284, Asp-321, Asp-325, and Arg-460. 2 residues coordinate Mg(2+): Asp-321 and Asp-325. Positions 321–325 match the DDXXD motif motif; the sequence is DDAYD. Residues Asn-463, Thr-467, and Glu-471 each contribute to the Mg(2+) site.

Belongs to the terpene synthase family. Tpsb subfamily. It depends on Mg(2+) as a cofactor. Requires Mn(2+) as cofactor.

The enzyme catalyses (2E,6E)-farnesyl diphosphate = (1S,5S,6R)-alpha-bergamotene + diphosphate. It catalyses the reaction (2E,6E)-farnesyl diphosphate = (+)-alpha-santalene + diphosphate. The catalysed reaction is (2E,6E)-farnesyl diphosphate = (-)-beta-santalene + diphosphate. Its function is as follows. Catalyzes a mixture of sesquiterpenoids from (2E,6E)-farnesyl diphosphate in fragrance biosynthesis. Catalyzes the formation of alpha-santalene, beta-santalene, epi-beta-santalene and exo-alpha-bergamotene, as well as traces of alpha-farnesene and beta-farnesene. This Santalum austrocaledonicum (Sandalwood) protein is Santalene synthase.